A 156-amino-acid chain; its full sequence is MILKADFLKLSANNLISWARQGSFWPLTFGLACCALEMMHATVSRYDFDRFGVIFRATPRQADLIIVAGTVTNKMAPALRRLYDQTADPKWVLSMGSCANGGGYYHYSYAVVKGCDKIIPVDMLCPRCPPTAEALFFGVLQLQKTLMKTINEKKVF.

Residues cysteine 33, cysteine 34, cysteine 98, and cysteine 128 each coordinate [4Fe-4S] cluster.

This sequence belongs to the complex I 20 kDa subunit family. [4Fe-4S] cluster is required as a cofactor.

It is found in the mitochondrion. The catalysed reaction is a ubiquinone + NADH + 5 H(+)(in) = a ubiquinol + NAD(+) + 4 H(+)(out). This Paramecium tetraurelia protein is NADH-ubiquinone oxidoreductase 20 kDa subunit (NAD10).